Reading from the N-terminus, the 615-residue chain is Putative DNA ligase 205R (615 aa).

The active-site N6-AMP-lysine intermediate is Lys101.

It belongs to the NAD-dependent DNA ligase family.

It carries out the reaction NAD(+) + (deoxyribonucleotide)n-3'-hydroxyl + 5'-phospho-(deoxyribonucleotide)m = (deoxyribonucleotide)n+m + AMP + beta-nicotinamide D-nucleotide.. In terms of biological role, catalyzes the formation of phosphodiester linkages between 5'-phosphoryl and 3'-hydroxyl groups in double-stranded DNA using NAD as a coenzyme and as the energy source for the reaction. The polypeptide is Putative DNA ligase 205R (Invertebrate iridescent virus 6 (IIV-6)).